The following is a 579-amino-acid chain: Tyrosine 3-monooxygenase (579 aa).

Acidic residues predominate over residues V105–Q114. A disordered region spans residues V105–D132. Fe cation contacts are provided by H409, H414, and E454.

The protein belongs to the biopterin-dependent aromatic amino acid hydroxylase family. Fe(2+) serves as cofactor.

The protein localises to the cytoplasm. It localises to the perinuclear region. It is found in the cell projection. Its subcellular location is the axon. The enzyme catalyses (6R)-L-erythro-5,6,7,8-tetrahydrobiopterin + L-tyrosine + O2 = (4aS,6R)-4a-hydroxy-L-erythro-5,6,7,8-tetrahydrobiopterin + L-dopa. The protein operates within catecholamine biosynthesis; dopamine biosynthesis; dopamine from L-tyrosine: step 1/2. With respect to regulation, phosphorylation leads to an increase in the catalytic activity. Its function is as follows. Plays an important role in the physiology of adrenergic neurons. In Drosophila melanogaster (Fruit fly), this protein is Tyrosine 3-monooxygenase (ple).